The following is a 286-amino-acid chain: Energy-coupling factor transporter ATP-binding protein EcfA2 (286 aa).

Residues 3–245 form the ABC transporter domain; the sequence is IKIENLTYTY…IDTLEKVGLA (243 aa). Residue 40 to 47 participates in ATP binding; sequence GHTGSGKS.

It belongs to the ABC transporter superfamily. Energy-coupling factor EcfA family. Forms a stable energy-coupling factor (ECF) transporter complex composed of 2 membrane-embedded substrate-binding proteins (S component), 2 ATP-binding proteins (A component) and 2 transmembrane proteins (T component).

The protein localises to the cell membrane. Its function is as follows. ATP-binding (A) component of a common energy-coupling factor (ECF) ABC-transporter complex. Unlike classic ABC transporters this ECF transporter provides the energy necessary to transport a number of different substrates. This chain is Energy-coupling factor transporter ATP-binding protein EcfA2, found in Clostridium acetobutylicum (strain ATCC 824 / DSM 792 / JCM 1419 / IAM 19013 / LMG 5710 / NBRC 13948 / NRRL B-527 / VKM B-1787 / 2291 / W).